The sequence spans 310 residues: Alpha/beta hydrolase domain-containing protein 17A (310 aa).

Catalysis depends on charge relay system residues S190, D255, and H284. At S307 the chain carries Phosphoserine.

The protein belongs to the AB hydrolase superfamily. ABHD17 family. Palmitoylated on cysteine residues located in a cysteine cluster at the N-terminus which promotes membrane localization. Palmitoylation is required for post-synaptic localization and for depalmitoylating activity towards DLG4/PSD95.

It is found in the cell membrane. The protein resides in the endosome membrane. It localises to the cell projection. The protein localises to the dendritic spine. Its subcellular location is the postsynaptic density membrane. The enzyme catalyses S-hexadecanoyl-L-cysteinyl-[protein] + H2O = L-cysteinyl-[protein] + hexadecanoate + H(+). Its activity is regulated as follows. Inhibited by palmostatin-B. Its function is as follows. Hydrolyzes fatty acids from S-acylated cysteine residues in proteins. Has depalmitoylating activity towards NRAS. Has depalmitoylating activity towards DLG4/PSD95. May have depalmitoylating activity towards MAP6. The polypeptide is Alpha/beta hydrolase domain-containing protein 17A (Homo sapiens (Human)).